The chain runs to 637 residues: MSNWSIDDARASYNVNHWSQGLYGISDDGEVTVSPDPSRPECKIGLNEMAKDMVKSGVALPVLVRFPQILHHRVNSLCQAFNQAIQKYQYENDYLLVYPIKVNQQQTVVEEILASQVEKEVPQLGLEAGSKPELMAVLAMAQKASSVIICNGYKDKEYIRLALIGEKLGHKVYIVLEKISELKVVLEQAKELGVTPRLGLRVRLAFQGKGKWQASGGEKSKFGLSAAQVLQVITSLKQENMLDSLELLHFHLGSQIANIRDIRQGVSEAGRFYCELMKLGANVKCFDVGGGLAVDYDGTRSQSSHSMNYGLTEYANNIVSVLTDMCKEYEQPMPRIISESGRYLTAHHAVLLTDVIGTEAYKPEDIQPPAEDAPQLLHNMWQSWVEVSGKADQRALIEIFHDCQSDLTEVHSLFAVGQVGLAERAWAEQVNLRVCYELQGSMSAKYRFHRPIIDELNEKLADKFFVNFSLFQSLPDAWGIDQVFPVMPLSGLDKAPESRAVMLDITCDSDGTIDQYVDGQGIETTLPVPAWTQESPYLIGFFLVGAYQEILGDMHNLFGDTNSAVVRLDEDARTNVESVLAGDTVADVLRYVNLDAVSFMRTYEELVNKHIAEDERANILEELQLGLKGYTYLEDFS.

Lysine 101 carries the post-translational modification N6-(pyridoxal phosphate)lysine. Substrate is bound at residue 286-296 (FDVGGGLAVDY).

This sequence belongs to the Orn/Lys/Arg decarboxylase class-II family. SpeA subfamily. The cofactor is Mg(2+). Requires pyridoxal 5'-phosphate as cofactor.

The enzyme catalyses L-arginine + H(+) = agmatine + CO2. Its pathway is amine and polyamine biosynthesis; agmatine biosynthesis; agmatine from L-arginine: step 1/1. Catalyzes the biosynthesis of agmatine from arginine. The protein is Biosynthetic arginine decarboxylase of Shewanella halifaxensis (strain HAW-EB4).